The sequence spans 290 residues: Fructose-1,6-bisphosphatase class 1 (290 aa).

Mg(2+)-binding residues include glutamate 78, aspartate 96, leucine 98, and aspartate 99. Substrate contacts are provided by residues 99 to 102, tyrosine 201, and lysine 226; that span reads DGSS. Mg(2+) is bound at residue glutamate 232.

The protein belongs to the FBPase class 1 family. In terms of assembly, homotetramer. Mg(2+) is required as a cofactor.

The protein resides in the cytoplasm. It catalyses the reaction beta-D-fructose 1,6-bisphosphate + H2O = beta-D-fructose 6-phosphate + phosphate. It participates in carbohydrate biosynthesis; gluconeogenesis. The polypeptide is Fructose-1,6-bisphosphatase class 1 (Helicobacter acinonychis (strain Sheeba)).